Here is a 353-residue protein sequence, read N- to C-terminus: GTPase Obg (353 aa).

The 159-residue stretch at 1 to 159 (MKFLDEAKVY…RWIWLRLKLI (159 aa)) folds into the Obg domain. One can recognise an OBG-type G domain in the interval 160 to 327 (ADAGLVGLPN…ALRALAAVIG (168 aa)). GTP contacts are provided by residues 166 to 173 (GLPNAGKS), 191 to 195 (FTTLH), 212 to 215 (DIPG), 279 to 282 (NKID), and 308 to 310 (SGV). 2 residues coordinate Mg(2+): Ser173 and Thr193.

It belongs to the TRAFAC class OBG-HflX-like GTPase superfamily. OBG GTPase family. As to quaternary structure, monomer. It depends on Mg(2+) as a cofactor.

It localises to the cytoplasm. Functionally, an essential GTPase which binds GTP, GDP and possibly (p)ppGpp with moderate affinity, with high nucleotide exchange rates and a fairly low GTP hydrolysis rate. Plays a role in control of the cell cycle, stress response, ribosome biogenesis and in those bacteria that undergo differentiation, in morphogenesis control. The protein is GTPase Obg of Rhodopseudomonas palustris (strain BisB5).